A 243-amino-acid polypeptide reads, in one-letter code: MAISHRGFTITRVPMLADNYAWLVAHGGASAFVDPADAAAAIEAVEAAGGRLDWVLLTHHHDDHIAGAVDLAARFGARIAGNAADAARLPRLDAALAPGQTIDLGGEAVRMIATPGHTVGHVTYLFGDAAAACGDTLFSLGCGRMFEGTPAQFHASLQALAALDPETLMLCGHEYTLSNARFARHVDPDNAALAARAAEAERLRAAGAPTLPVRLADELAANPFLRAASAEEFARLRAAKDKF.

Residues His59, His61, Asp63, His64, His117, Asp135, and His173 each coordinate Zn(2+).

Belongs to the metallo-beta-lactamase superfamily. Glyoxalase II family. In terms of assembly, monomer. It depends on Zn(2+) as a cofactor.

The enzyme catalyses an S-(2-hydroxyacyl)glutathione + H2O = a 2-hydroxy carboxylate + glutathione + H(+). It participates in secondary metabolite metabolism; methylglyoxal degradation; (R)-lactate from methylglyoxal: step 2/2. In terms of biological role, thiolesterase that catalyzes the hydrolysis of S-D-lactoyl-glutathione to form glutathione and D-lactic acid. The sequence is that of Hydroxyacylglutathione hydrolase from Acidiphilium cryptum (strain JF-5).